The sequence spans 634 residues: Chaperone protein HtpG (634 aa).

The segment at 1–342 is a; substrate-binding; it reads MSVETQKETL…SNDLSLNVSR (342 aa). The interval 343–559 is b; the sequence is EILQKDPVID…EQDLGLQMRQ (217 aa). Residues 560–634 form a c region; it reads ILEASGQKVP…LNKLLVELSA (75 aa).

It belongs to the heat shock protein 90 family. As to quaternary structure, homodimer.

It is found in the cytoplasm. In terms of biological role, molecular chaperone. Has ATPase activity. This is Chaperone protein HtpG from Pseudomonas aeruginosa (strain ATCC 15692 / DSM 22644 / CIP 104116 / JCM 14847 / LMG 12228 / 1C / PRS 101 / PAO1).